Here is a 226-residue protein sequence, read N- to C-terminus: PtdIns3K complex I subunit atg38 (226 aa).

Ser2 is subject to N-acetylserine. Coiled coils occupy residues 52 to 85 (DVTQ…ENNI) and 182 to 209 (FKEY…LRER).

The protein belongs to the ATG38 family. In terms of assembly, homodimer. Component of the autophagy-specific VPS34 PI3-kinase complex I composed of VPS15, VPS30, VPS34, ATG14 and an ATG38 homodimer. Interacts directly with ATG14 and VPS34.

The protein resides in the cytoplasm. It localises to the preautophagosomal structure membrane. In terms of biological role, autophagy-related protein required for cytoplasm to vacuole transport (Cvt) and autophagy as a part of the autophagy-specific VPS34 PI3-kinase complex I. This complex is essential to recruit the ATG8-phosphatidylinositol conjugate and the ATG12-ATG5 conjugate to the pre-autophagosomal structure. ATG38 is required for the integrity of the active PI3-kinase complex I by maintaining an association between VPS15-VPS34 and ATG14-VPS30 subcomplexes. This chain is PtdIns3K complex I subunit atg38, found in Saccharomyces cerevisiae (strain ATCC 204508 / S288c) (Baker's yeast).